The following is a 315-amino-acid chain: Aspartate carbamoyltransferase catalytic subunit (315 aa).

Carbamoyl phosphate-binding residues include R65 and T66. L-aspartate is bound at residue K93. Carbamoyl phosphate is bound by residues R115, H145, and Q148. L-aspartate-binding residues include R179 and R234. Positions 275 and 276 each coordinate carbamoyl phosphate.

The protein belongs to the aspartate/ornithine carbamoyltransferase superfamily. ATCase family. Heterododecamer (2C3:3R2) of six catalytic PyrB chains organized as two trimers (C3), and six regulatory PyrI chains organized as three dimers (R2).

It carries out the reaction carbamoyl phosphate + L-aspartate = N-carbamoyl-L-aspartate + phosphate + H(+). The protein operates within pyrimidine metabolism; UMP biosynthesis via de novo pathway; (S)-dihydroorotate from bicarbonate: step 2/3. Its function is as follows. Catalyzes the condensation of carbamoyl phosphate and aspartate to form carbamoyl aspartate and inorganic phosphate, the committed step in the de novo pyrimidine nucleotide biosynthesis pathway. The sequence is that of Aspartate carbamoyltransferase catalytic subunit from Xanthomonas axonopodis pv. citri (strain 306).